Consider the following 507-residue polypeptide: Peroxisomal catalase (507 aa).

Catalysis depends on residues histidine 65 and asparagine 138. Tyrosine 348 contacts heme. Residues 505–507 (SKI) carry the Microbody targeting signal motif.

Belongs to the catalase family. As to quaternary structure, homotetramer. Requires heme as cofactor.

Its subcellular location is the peroxisome matrix. The catalysed reaction is 2 H2O2 = O2 + 2 H2O. Its function is as follows. Catalyzes the degradation of hydrogen peroxide (H(2)O(2)) generated by peroxisomal oxidases to water and oxygen, thereby protecting cells from the toxic effects of hydrogen peroxide. In Pichia angusta (Yeast), this protein is Peroxisomal catalase (PXP9).